The primary structure comprises 419 residues: Ribosome biogenesis protein WDR12 homolog (419 aa).

The segment at 10–91 (VQVHLKTKQE…EDAIDIEYVE (82 aa)) is ubiquitin-like (UBL) domain. 7 WD repeats span residues 103–140 (LHDDWVSAVKACGKWILTGCYDNTINIWTNKGKHKLTI), 142–184 (GHTA…NAVE), 191–230 (GHERGVDSVCVSPDAQRFATGSWDTMLKIWSAGLDDTSEG), 249–287 (GHRESISAVQWMDATTLVTGSWDHTLKVWDLQLEGIKTE), 289–328 (STNKSIFDASYSKLNRLIVTASADKNLRLYDARTNQGSVV), 334–374 (GHNA…APLY), and 378–416 (GHGEKVLDIDWSNPKYIVSGGADNTVRVFKSGKATIENM).

Belongs to the WD repeat WDR12/YTM1 family.

It localises to the nucleus. Its subcellular location is the nucleolus. The protein resides in the nucleoplasm. Its function is as follows. Required for maturation of ribosomal RNAs and formation of the large ribosomal subunit. The polypeptide is Ribosome biogenesis protein WDR12 homolog (Drosophila virilis (Fruit fly)).